The primary structure comprises 286 residues: Probable aquaporin PIP2-5 (286 aa).

Met1 is modified (N-acetylmethionine). Positions 1-18 (MTKEVVGDKRSFSGKDYQ) are enriched in basic and acidic residues. The segment at 1–23 (MTKEVVGDKRSFSGKDYQDPPPE) is disordered. The Cytoplasmic portion of the chain corresponds to 1–38 (MTKEVVGDKRSFSGKDYQDPPPEPLFDATELGKWSFYR). Lys3 is subject to N6,N6-dimethyllysine. The helical transmembrane segment at 39 to 59 (ALIAEFIATLLFLYVTIMTVI) threads the bilayer. The Extracellular portion of the chain corresponds to 60-75 (GYKSQTDPALNPDQCT). A helical transmembrane segment spans residues 76 to 96 (GVGVLGIAWAFGGMIFILVYC). The Cytoplasmic portion of the chain corresponds to 97–124 (TAGISGGHINPAVTFGLLLARKVTLVRA). An NPA 1 motif is present at residues 106–108 (NPA). A helical transmembrane segment spans residues 125-145 (VMYMVAQCLGAICGVALVKAF). The Extracellular segment spans residues 146–165 (QSAYFTRYGGGANGLSDGYS). A helical membrane pass occupies residues 166-186 (IGTGVAAEIIGTFVLVYTVFS). The Cytoplasmic portion of the chain corresponds to 187–200 (ATDPKRSARDSHVP). The chain crosses the membrane as a helical span at residues 201–221 (VLAPLPIGFAVFIVHLATIPI). The Extracellular portion of the chain corresponds to 222 to 248 (TGTGINPARSLGAAIIYNKDKAWDHHW). The NPA 2 motif lies at 227–229 (NPA). Residues 249–269 (IFWVGPFAGAAIAAFYHQFVL) traverse the membrane as a helical segment. Residues 270–286 (RAGAIKALGSFRSQPHV) are Cytoplasmic-facing. Residues Ser279 and Ser282 each carry the phosphoserine modification.

The protein belongs to the MIP/aquaporin (TC 1.A.8) family. PIP (TC 1.A.8.11) subfamily. In terms of tissue distribution, expressed in green siliques.

It is found in the cell membrane. In terms of biological role, aquaporins facilitate the transport of water and small neutral solutes across cell membranes. In Arabidopsis thaliana (Mouse-ear cress), this protein is Probable aquaporin PIP2-5 (PIP2-5).